Reading from the N-terminus, the 689-residue chain is Elongation factor G (689 aa).

The tr-type G domain maps to 8–282 (ENTRNLGIMA…AVVDYLPSPL (275 aa)). Residues 17-24 (AHIDAGKT), 81-85 (DTPGH), and 135-138 (NKMD) each bind GTP.

It belongs to the TRAFAC class translation factor GTPase superfamily. Classic translation factor GTPase family. EF-G/EF-2 subfamily.

Its subcellular location is the cytoplasm. In terms of biological role, catalyzes the GTP-dependent ribosomal translocation step during translation elongation. During this step, the ribosome changes from the pre-translocational (PRE) to the post-translocational (POST) state as the newly formed A-site-bound peptidyl-tRNA and P-site-bound deacylated tRNA move to the P and E sites, respectively. Catalyzes the coordinated movement of the two tRNA molecules, the mRNA and conformational changes in the ribosome. The polypeptide is Elongation factor G (Mesoplasma florum (strain ATCC 33453 / NBRC 100688 / NCTC 11704 / L1) (Acholeplasma florum)).